The primary structure comprises 349 residues: Probable dual-specificity RNA methyltransferase RlmN (349 aa).

The active-site Proton acceptor is the E93. One can recognise a Radical SAM core domain in the interval 99-329 (YKHGNTICVS…TTIRREMGSD (231 aa)). Residues C106 and C334 are joined by a disulfide bond. Residues C113, C117, and C120 each coordinate [4Fe-4S] cluster. Residues 160 to 161 (GE), S192, 215 to 217 (SLH), and N291 each bind S-adenosyl-L-methionine. Catalysis depends on C334, which acts as the S-methylcysteine intermediate.

Belongs to the radical SAM superfamily. RlmN family. [4Fe-4S] cluster serves as cofactor.

It localises to the cytoplasm. It carries out the reaction adenosine(2503) in 23S rRNA + 2 reduced [2Fe-2S]-[ferredoxin] + 2 S-adenosyl-L-methionine = 2-methyladenosine(2503) in 23S rRNA + 5'-deoxyadenosine + L-methionine + 2 oxidized [2Fe-2S]-[ferredoxin] + S-adenosyl-L-homocysteine. It catalyses the reaction adenosine(37) in tRNA + 2 reduced [2Fe-2S]-[ferredoxin] + 2 S-adenosyl-L-methionine = 2-methyladenosine(37) in tRNA + 5'-deoxyadenosine + L-methionine + 2 oxidized [2Fe-2S]-[ferredoxin] + S-adenosyl-L-homocysteine. Functionally, specifically methylates position 2 of adenine 2503 in 23S rRNA and position 2 of adenine 37 in tRNAs. The polypeptide is Probable dual-specificity RNA methyltransferase RlmN (Clostridium tetani (strain Massachusetts / E88)).